Here is a 305-residue protein sequence, read N- to C-terminus: tRNA uridine(34) hydroxylase (305 aa).

One can recognise a Rhodanese domain in the interval Ala-136–Ser-230. Cys-190 acts as the Cysteine persulfide intermediate in catalysis.

The protein belongs to the TrhO family.

It catalyses the reaction uridine(34) in tRNA + AH2 + O2 = 5-hydroxyuridine(34) in tRNA + A + H2O. Catalyzes oxygen-dependent 5-hydroxyuridine (ho5U) modification at position 34 in tRNAs. This is tRNA uridine(34) hydroxylase from Brucella melitensis biotype 1 (strain ATCC 23456 / CCUG 17765 / NCTC 10094 / 16M).